The following is an 81-amino-acid chain: Cell division protein ZapB (81 aa).

The stretch at Leu-5–Val-81 forms a coiled coil. The residue at position 10 (Lys-10) is an N6-acetyllysine. Residues Asn-36 to Trp-67 form a disordered region. Over residues Asn-37–Gln-47 the composition is skewed to polar residues. Residues His-48 to Glu-62 show a composition bias toward basic and acidic residues.

This sequence belongs to the ZapB family. Homodimer. The ends of the coiled-coil dimer bind to each other, forming polymers. Interacts with FtsZ.

It localises to the cytoplasm. In terms of biological role, non-essential, abundant cell division factor that is required for proper Z-ring formation. It is recruited early to the divisome by direct interaction with FtsZ, stimulating Z-ring assembly and thereby promoting cell division earlier in the cell cycle. Its recruitment to the Z-ring requires functional FtsA or ZipA. In Shigella boydii serotype 4 (strain Sb227), this protein is Cell division protein ZapB.